We begin with the raw amino-acid sequence, 461 residues long: Eukaryotic translation initiation factor 3 subunit M (461 aa).

The interval 42–61 (LLEPLRQQEQSDAEPDRKQR) is disordered. Positions 205-376 (DQELAQTHVV…SEFLVHRATY (172 aa)) constitute a PCI domain. Positions 422-461 (AAEEAAQGKSGDKKGDRRQRRDQPQQSQPAPEAATAVAAE) are disordered. Basic and acidic residues predominate over residues 431–444 (SGDKKGDRRQRRDQ). Positions 445–461 (PQQSQPAPEAATAVAAE) are enriched in low complexity.

It belongs to the eIF-3 subunit M family. Component of the eukaryotic translation initiation factor 3 (eIF-3) complex.

Its subcellular location is the cytoplasm. Functionally, component of the eukaryotic translation initiation factor 3 (eIF-3) complex, which is involved in protein synthesis of a specialized repertoire of mRNAs and, together with other initiation factors, stimulates binding of mRNA and methionyl-tRNAi to the 40S ribosome. The eIF-3 complex specifically targets and initiates translation of a subset of mRNAs involved in cell proliferation. This Aspergillus terreus (strain NIH 2624 / FGSC A1156) protein is Eukaryotic translation initiation factor 3 subunit M.